The following is a 191-amino-acid chain: Lipid A acyltransferase PagP (191 aa).

An N-terminal signal peptide occupies residues 1 to 23 (MRLFYQRISLLISLCGFFSAAWA). Catalysis depends on residues H62, D105, and S106.

Belongs to the lipid A palmitoyltransferase family. Homodimer.

Its subcellular location is the cell outer membrane. The enzyme catalyses a lipid A + a 1,2-diacyl-sn-glycero-3-phosphocholine = a hepta-acyl lipid A + a 2-acyl-sn-glycero-3-phosphocholine. The catalysed reaction is a lipid IVA + a 1,2-diacyl-sn-glycero-3-phosphocholine = a lipid IVB + a 2-acyl-sn-glycero-3-phosphocholine. It catalyses the reaction a lipid IIA + a 1,2-diacyl-sn-glycero-3-phosphocholine = a lipid IIB + a 2-acyl-sn-glycero-3-phosphocholine. Functionally, transfers a fatty acid residue from the sn-1 position of a phospholipid to the N-linked hydroxyfatty acid chain on the proximal unit of lipid A or its precursors. In Sodalis glossinidius (strain morsitans), this protein is Lipid A acyltransferase PagP.